We begin with the raw amino-acid sequence, 377 residues long: Nitric oxide reductase FlRd-NAD(+) reductase (377 aa).

The protein belongs to the FAD-dependent oxidoreductase family. Requires FAD as cofactor.

Its subcellular location is the cytoplasm. It catalyses the reaction 2 reduced [nitric oxide reductase rubredoxin domain] + NAD(+) + H(+) = 2 oxidized [nitric oxide reductase rubredoxin domain] + NADH. The protein operates within nitrogen metabolism; nitric oxide reduction. One of at least two accessory proteins for anaerobic nitric oxide (NO) reductase. Reduces the rubredoxin moiety of NO reductase. The protein is Nitric oxide reductase FlRd-NAD(+) reductase of Salmonella typhi.